We begin with the raw amino-acid sequence, 179 residues long: Peptide deformylase (179 aa).

The Fe cation site is built by Cys102 and His144. Glu145 is an active-site residue. Residue His148 coordinates Fe cation.

It belongs to the polypeptide deformylase family. Requires Fe(2+) as cofactor.

The catalysed reaction is N-terminal N-formyl-L-methionyl-[peptide] + H2O = N-terminal L-methionyl-[peptide] + formate. Functionally, removes the formyl group from the N-terminal Met of newly synthesized proteins. Requires at least a dipeptide for an efficient rate of reaction. N-terminal L-methionine is a prerequisite for activity but the enzyme has broad specificity at other positions. The polypeptide is Peptide deformylase (Wolbachia pipientis subsp. Culex pipiens (strain wPip)).